Reading from the N-terminus, the 1433-residue chain is Probable ATP-dependent RNA helicase spindle-E (1433 aa).

The disordered stretch occupies residues N76 to R98. A compositionally biased stretch (acidic residues) spans E81–M91. Residues M127–V294 form the Helicase ATP-binding domain. An ATP-binding site is contributed by G140 to T147. The DEAH box motif lies at D240–H243. The 173-residue stretch at Q354–E526 folds into the Helicase C-terminal domain. Residues A937–D1000 enclose the Tudor domain.

It belongs to the DEAD box helicase family. DEAH subfamily.

It localises to the cytoplasm. The enzyme catalyses ATP + H2O = ADP + phosphate + H(+). In terms of biological role, probable ATP-binding RNA helicase which plays a central role during spermatogenesis and oogenesis by repressing transposable elements and preventing their mobilization, which is essential for the germline integrity. Acts via the piRNA metabolic process, which mediates the repression of transposable elements during meiosis by forming complexes composed of piRNAs and Piwi and govern the methylation and subsequent repression of transposons. Involved in the repression of LTR retrotransposon copia. Also involved in telomere regulation by repressing specialized telomeric retroelements HeT-A, TAHRE, and TART; Drosophila telomeres being maintained by transposition of specialized telomeric retroelements. Involved in telomeric trans-silencing, a repression mechanism by which a transposon or a transgene inserted in subtelomeric heterochromatin has the capacity to repress in trans in the female germline, a homologous transposon, or transgene located in euchromatin. Involved in the repression of testis-expressed Stellate genes by the homologous Su(Ste) repeats. Required for anteroposterior and dorsoventral axis formation during oogenesis. In Drosophila virilis (Fruit fly), this protein is Probable ATP-dependent RNA helicase spindle-E (spn-E).